The chain runs to 500 residues: Glycerol-3-phosphate acyltransferase 7 (500 aa).

The next 2 membrane-spanning stretches (helical) occupy residues 38-58 (GLIR…LDVL) and 235-255 (ALII…RIFV). The HXXXXD motif signature appears at 298 to 303 (HRTLMD).

This sequence belongs to the GPAT/DAPAT family. As to expression, weakly or not expressed in roots, leaves, seedlings, developing siliques and flower buds.

It is found in the membrane. It catalyses the reaction sn-glycerol 3-phosphate + an acyl-CoA = a 1-acyl-sn-glycero-3-phosphate + CoA. It participates in phospholipid metabolism; CDP-diacylglycerol biosynthesis; CDP-diacylglycerol from sn-glycerol 3-phosphate: step 1/3. Esterifies acyl-group from acyl-ACP to the sn-1 position of glycerol-3-phosphate, an essential step in glycerolipid biosynthesis. This is Glycerol-3-phosphate acyltransferase 7 (GPAT7) from Arabidopsis thaliana (Mouse-ear cress).